The sequence spans 158 residues: Transcriptional repressor NrdR (158 aa).

Residues 3-34 fold into a zinc finger; it reads CPFCGNADTQVVDSRVSEEGDTIRRRRRCLSC. The ATP-cone domain maps to 49–139; it reads PSVVKRNGSR…VYKNFEDIGE (91 aa).

It belongs to the NrdR family. The cofactor is Zn(2+).

In terms of biological role, negatively regulates transcription of bacterial ribonucleotide reductase nrd genes and operons by binding to NrdR-boxes. This is Transcriptional repressor NrdR from Bordetella petrii (strain ATCC BAA-461 / DSM 12804 / CCUG 43448).